Consider the following 398-residue polypeptide: Probable sugar efflux transporter (398 aa).

12 helical membrane-spanning segments follow: residues 15–35 (VVTL…PVGL), 50–70 (VGIM…PFML), 81–101 (LIGL…AWNF), 103–123 (VLVI…SITA), 136–156 (AQAL…GLPI), 169–189 (TFFA…KLLP), 209–229 (PALM…YTAY), 246–266 (FATV…VLFG), 275–295 (LLVS…MPAA), 301–321 (LAIL…GMQV), 333–353 (VAMS…ALVG), and 364–384 (AIGY…ILIF).

The protein belongs to the major facilitator superfamily. SotB (TC 2.A.1.2) family.

It localises to the cell inner membrane. Involved in the efflux of sugars. The physiological role may be the reduction of the intracellular concentration of toxic sugars or sugar metabolites. In Enterobacter sp. (strain 638), this protein is Probable sugar efflux transporter.